Here is a 485-residue protein sequence, read N- to C-terminus: MTITPQQLQAMLPLLIVGLTVVVVMLSIAWRRDHFINATLTVIGLNLALLSLYFVGQVGPLDVTPLMRVDGYAMFYIGLVIVASLATSTFAYPWLNGYPDNREEFYLLVLIATMGGILLASANHLASLFLGIELISLPLFGLIGYAYRQKRSLEASIKYMLLSAAASSFLLFGMALLYAESGSLSFAGLGKSLSDSMIHQPLILAGLGMMIVGLGFKLSLVPFQLWTPDVYQGAPAPVSTFLATASKIAIFAVVMRLFLYAPAADSEAVRLVLSLIAVASILFGNLMAISQTNIKRLLGYSSIAHLGYLLIALVAVQTHQLALETAGVYLAGYLFSSLGAFGVVSLMSSPYKGPDAESLFSYRGLFWHKPILSAVMTVMMLSLAGIPMTLGFIGKFFVVAMGVSANLWWLTGAVVLGSAIGLYYYLRVTVSLYLSAPETLVRDTPSNWALTAGGVVVLISAILVLVLGIYPQPLISLVQLAQPLM.

14 consecutive transmembrane segments (helical) span residues 10-30 (AMLPLLIVGLTVVVVMLSIAW), 35-55 (FINATLTVIGLNLALLSLYFV), 75-95 (FYIGLVIVASLATSTFAYPWL), 104-124 (EFYLLVLIATMGGILLASANH), 125-145 (LASLFLGIELISLPLFGLIGY), 159-179 (YMLLSAAASSFLLFGMALLYA), 203-223 (ILAGLGMMIVGLGFKLSLVPF), 235-255 (PAPVSTFLATASKIAIFAVVM), 271-291 (LVLSLIAVASILFGNLMAISQ), 297-317 (LLGYSSIAHLGYLLIALVAVQ), 327-347 (GVYLAGYLFSSLGAFGVVSLM), 374-394 (AVMTVMMLSLAGIPMTLGFIG), 408-427 (WWLTGAVVLGSAIGLYYYLR), and 449-469 (ALTAGGVVVLISAILVLVLGI).

This sequence belongs to the complex I subunit 2 family. As to quaternary structure, NDH-1 is composed of 13 different subunits. Subunits NuoA, H, J, K, L, M, N constitute the membrane sector of the complex.

Its subcellular location is the cell inner membrane. It carries out the reaction a quinone + NADH + 5 H(+)(in) = a quinol + NAD(+) + 4 H(+)(out). NDH-1 shuttles electrons from NADH, via FMN and iron-sulfur (Fe-S) centers, to quinones in the respiratory chain. The immediate electron acceptor for the enzyme in this species is believed to be ubiquinone. Couples the redox reaction to proton translocation (for every two electrons transferred, four hydrogen ions are translocated across the cytoplasmic membrane), and thus conserves the redox energy in a proton gradient. This is NADH-quinone oxidoreductase subunit N from Yersinia enterocolitica serotype O:8 / biotype 1B (strain NCTC 13174 / 8081).